Here is a 362-residue protein sequence, read N- to C-terminus: UDP-N-acetylglucosamine--N-acetylmuramyl-(pentapeptide) pyrophosphoryl-undecaprenol N-acetylglucosamine transferase (362 aa).

UDP-N-acetyl-alpha-D-glucosamine contacts are provided by residues 15–17 (TGG), asparagine 127, arginine 165, serine 191, isoleucine 247, 266–271 (ALTVSE), and glutamine 292.

It belongs to the glycosyltransferase 28 family. MurG subfamily.

The protein resides in the cell inner membrane. It carries out the reaction di-trans,octa-cis-undecaprenyl diphospho-N-acetyl-alpha-D-muramoyl-L-alanyl-D-glutamyl-meso-2,6-diaminopimeloyl-D-alanyl-D-alanine + UDP-N-acetyl-alpha-D-glucosamine = di-trans,octa-cis-undecaprenyl diphospho-[N-acetyl-alpha-D-glucosaminyl-(1-&gt;4)]-N-acetyl-alpha-D-muramoyl-L-alanyl-D-glutamyl-meso-2,6-diaminopimeloyl-D-alanyl-D-alanine + UDP + H(+). It functions in the pathway cell wall biogenesis; peptidoglycan biosynthesis. In terms of biological role, cell wall formation. Catalyzes the transfer of a GlcNAc subunit on undecaprenyl-pyrophosphoryl-MurNAc-pentapeptide (lipid intermediate I) to form undecaprenyl-pyrophosphoryl-MurNAc-(pentapeptide)GlcNAc (lipid intermediate II). The polypeptide is UDP-N-acetylglucosamine--N-acetylmuramyl-(pentapeptide) pyrophosphoryl-undecaprenol N-acetylglucosamine transferase (Shewanella baltica (strain OS155 / ATCC BAA-1091)).